Reading from the N-terminus, the 728-residue chain is Catalase-peroxidase (728 aa).

An N-terminal signal peptide occupies residues 1-19; the sequence is MSTEAKCPVTGGATRSSSA. Residues 1–20 form a disordered region; it reads MSTEAKCPVTGGATRSSSAG. The tryptophyl-tyrosyl-methioninium (Trp-Tyr) (with M-245) cross-link spans 96 to 219; it reads WHAAGTYRIG…LAAVQMGLIY (124 aa). The active-site Proton acceptor is H97. Residues 219 to 245 constitute a cross-link (tryptophyl-tyrosyl-methioninium (Tyr-Met) (with W-96)); that stretch reads YVNPEGPNGKPDPVAAARDIRETFARM. H260 contributes to the heme b binding site.

The protein belongs to the peroxidase family. Peroxidase/catalase subfamily. Homodimer or homotetramer. Heme b is required as a cofactor. Formation of the three residue Trp-Tyr-Met cross-link is important for the catalase, but not the peroxidase activity of the enzyme.

The enzyme catalyses H2O2 + AH2 = A + 2 H2O. It catalyses the reaction 2 H2O2 = O2 + 2 H2O. Functionally, bifunctional enzyme with both catalase and broad-spectrum peroxidase activity. The sequence is that of Catalase-peroxidase from Acidiphilium cryptum (strain JF-5).